Here is a 282-residue protein sequence, read N- to C-terminus: F-actin-capping protein subunit beta (282 aa).

Residues 73-103 form a disordered region; sequence SPWSNQFDPPLDEAGSGGVGAGGNEGAGEGA. Residues 87 to 101 show a composition bias toward gly residues; the sequence is GSGGVGAGGNEGAGE.

Belongs to the F-actin-capping protein beta subunit family. Component of the F-actin capping complex, composed of a heterodimer of an alpha and a beta subunit.

It localises to the cytoplasm. The protein resides in the cytoskeleton. The protein localises to the actin patch. F-actin-capping proteins bind in a Ca(2+)-independent manner to the fast growing ends of actin filaments (barbed end) thereby blocking the exchange of subunits at these ends. Unlike other capping proteins (such as gelsolin and severin), these proteins do not sever actin filaments. This chain is F-actin-capping protein subunit beta (CAP2), found in Gibberella zeae (strain ATCC MYA-4620 / CBS 123657 / FGSC 9075 / NRRL 31084 / PH-1) (Wheat head blight fungus).